Consider the following 151-residue polypeptide: 3-dehydroquinate dehydratase (151 aa).

Tyr24 (proton acceptor) is an active-site residue. Substrate contacts are provided by Asn76, His82, and Asp89. His102 functions as the Proton donor in the catalytic mechanism. Substrate contacts are provided by residues 103–104 (VS) and Arg113.

The protein belongs to the type-II 3-dehydroquinase family. In terms of assembly, homododecamer.

It carries out the reaction 3-dehydroquinate = 3-dehydroshikimate + H2O. It functions in the pathway metabolic intermediate biosynthesis; chorismate biosynthesis; chorismate from D-erythrose 4-phosphate and phosphoenolpyruvate: step 3/7. Functionally, catalyzes a trans-dehydration via an enolate intermediate. In Rhodopseudomonas palustris (strain BisA53), this protein is 3-dehydroquinate dehydratase.